We begin with the raw amino-acid sequence, 68 residues long: Large ribosomal subunit protein uL29 (68 aa).

The protein belongs to the universal ribosomal protein uL29 family.

The protein is Large ribosomal subunit protein uL29 of Streptococcus gordonii (strain Challis / ATCC 35105 / BCRC 15272 / CH1 / DL1 / V288).